Here is a 250-residue protein sequence, read N- to C-terminus: MSALLSPDQLEADLRAIGARLYHDQHPFHALLHHGKLDRGQVQAWALNRFEYQRCIPLKDAAILARMEDPTLRRIWRQRIVDHDGNSATDGGIARWLHLTDALGLDRTLVESGRALLPGTRFAVQAYLQFVSEKSLLEAIASSLTELFAPNIIGQRVAGMLKHYDFVSSDALAYFEHRLTEAPRDSDFALDYVKQHADTVEKQALVKAALHFKCSVLWAQLDALHVAYVTPGIVWPDAFVPDRDASRVAA.

The protein belongs to the PqqC family.

The enzyme catalyses 6-(2-amino-2-carboxyethyl)-7,8-dioxo-1,2,3,4,7,8-hexahydroquinoline-2,4-dicarboxylate + 3 O2 = pyrroloquinoline quinone + 2 H2O2 + 2 H2O + H(+). It functions in the pathway cofactor biosynthesis; pyrroloquinoline quinone biosynthesis. In terms of biological role, ring cyclization and eight-electron oxidation of 3a-(2-amino-2-carboxyethyl)-4,5-dioxo-4,5,6,7,8,9-hexahydroquinoline-7,9-dicarboxylic-acid to PQQ. The polypeptide is Pyrroloquinoline-quinone synthase (Xanthomonas oryzae pv. oryzae (strain MAFF 311018)).